The sequence spans 344 residues: Trace amine-associated receptor 8c (344 aa).

At 1-36 (MTSNFSQATLQLCYENVNASCIKTPYSPGLRVLLYM) the chain is on the extracellular side. 2 N-linked (GlcNAc...) asparagine glycosylation sites follow: Asn-4 and Asn-18. Cystine bridges form between Cys-21/Cys-185 and Cys-96/Cys-189. A helical membrane pass occupies residues 37 to 57 (VFGFGAVLAVCGNLLVVISVL). Topologically, residues 58–67 (HFKQLHSPAN) are cytoplasmic. A helical transmembrane segment spans residues 68-88 (FLIASLASADFLVGISVMPFS). The Extracellular portion of the chain corresponds to 89-102 (MVRSIESCWYFGDT). Residues 103 to 127 (FCSLHSCCDVAFCYSSALHLCFISV) traverse the membrane as a helical segment. Residues 128–146 (DRYIAVTDPLVYPTKFTVS) are Cytoplasmic-facing. The helical transmembrane segment at 147–167 (VSGICISISWILPLVYSSAVF) threads the bilayer. The Extracellular portion of the chain corresponds to 168 to 196 (YTGISAMGIENLVSALNCVGGCQVVVNQD). A helical transmembrane segment spans residues 197 to 217 (WVLISFLLFFIPTLVMIILYS). Topologically, residues 218-260 (KIFLVAKQQAVKIETSVSGSKGESSLESHKARVAKRERKAAKT) are cytoplasmic. A helical transmembrane segment spans residues 261–281 (LGVTVLAFIVSWLPYTIDTLI). Topologically, residues 282-295 (DAFMGFITPAYVYE) are extracellular. Residues 296 to 319 (FCCWSAYYNSAMNPLIYAFFYPWF) traverse the membrane as a helical segment. The Cytoplasmic segment spans residues 320–344 (RKAMKLILSGKILKGHSSTTSLFSE).

It belongs to the G-protein coupled receptor 1 family.

The protein resides in the cell membrane. Functionally, olfactory receptor activated by trace amines, such as N-methylpiperidine and N,N-dimethylcyclohexylamine. Trace amine compounds are enriched in animal body fluids and act on trace amine-associated receptors (TAARs) to elicit both intraspecific and interspecific innate behaviors. Ligand-binding causes a conformation change that triggers signaling via G(s)-class of G alpha proteins (GNAL or GNAS). The polypeptide is Trace amine-associated receptor 8c (Rattus norvegicus (Rat)).